A 348-amino-acid polypeptide reads, in one-letter code: Putative olfactory receptor 3A4 (348 aa).

At 1–28 (MDLGNSGNDSVVTKFVLLGLTETAALQP) the chain is on the extracellular side. An N-linked (GlcNAc...) asparagine glycan is attached at Asn8. Residues 29 to 52 (ILFVIFLLAYVTTIGGTLSILAAI) form a helical membrane-spanning segment. Topologically, residues 53–60 (LMETKLHS) are cytoplasmic. Residues 61–82 (PMYFFLGNLSLPDVGCVSVTVP) traverse the membrane as a helical segment. Over 83–103 (AMLSHFISNDRSIPYKACLSE) the chain is Extracellular. An intrachain disulfide couples Cys100 to Cys192. A helical membrane pass occupies residues 104–123 (LFFFHLLAGADCFLLTIMAY). Topologically, residues 124–143 (DRYLAICQSLTYSSRMSWGI) are cytoplasmic. The helical transmembrane segment at 144–161 (QQALVGMSCVFSFTNALT) threads the bilayer. The Extracellular segment spans residues 162–199 (QTVALSPLNFCGPNVINHFYCDLPQPFQLSCSSVHLNG). Residues 200–222 (QLLFVAAAFMGVAPLVLITVSYA) form a helical membrane-spanning segment. Residues 223–239 (HVAAAVLRIRSAEGRKK) are Cytoplasmic-facing. The helical transmembrane segment at 240-262 (AFSTCSSHLTVVGIFYGTGVFSY) threads the bilayer. At 263 to 275 (TRLGSVESSDKDK) the chain is on the extracellular side. A helical membrane pass occupies residues 276 to 295 (GIGILNTVISPMLNPLIYWT). Residues 296–348 (SLLDVGCISHCSSDAGVSPGPPVQSSLCCLQFTALLSPPPGWGGLSPLNSHGL) lie on the Cytoplasmic side of the membrane.

Belongs to the G-protein coupled receptor 1 family.

It is found in the cell membrane. Its function is as follows. Odorant receptor. The sequence is that of Putative olfactory receptor 3A4 (OR3A4P) from Homo sapiens (Human).